The following is a 492-amino-acid chain: MLAVTLLSLALLGSTCACSTSTSYEAGIVCRITKAALLVLNQETAKVIQTAFQRASYPDIKGERSMMLLGRVTYGLHNIQISHLSIASSQVELVEAKSVDVSIQNASVIFKGTLNYGYKGAWGLNIEQSVDFEIESAIDLQINTKLTCDSGHVRTDAPDCSISFHKLLLHLQGEREPGWTKQLFTNIISFTLKMVLKGQVCKEINVISNIMADFVQTRAANIISDRDIEVDISLTRSPIITATYLESHHKGHFIYKNISEVLPLPAFSPTLLGDTRMLYFWFSEQVLDSLAKAAFQDGRLQLNLAETELKVVLETWHFNPNQEIIPEVITGFPSPGQVTVHCPRRPTISCQNKGVVVSSPVVMEFLFPHKDGQDSVTHTFEEDIVATIQASYSKKKLFLSLVDFQIKPKTTSNMAESSESIQNFLQLMITTVGIPEIMSRLEVALTTLMNSKGLDLFDIINPEIITRDGFLLLQMDFGFPEHLLVDFLQSLN.

A signal peptide spans 1–17 (MLAVTLLSLALLGSTCA). An intrachain disulfide couples Cys160 to Cys201. Residue Asn257 is glycosylated (N-linked (GlcNAc...) asparagine).

It belongs to the BPI/LBP/Plunc superfamily. BPI/LBP family.

The protein localises to the secreted. The catalysed reaction is cholesteryl (9Z-octadecenoate)(in) = cholesteryl (9Z-octadecenoate)(out). The enzyme catalyses 1,2,3-tri-(9Z-octadecenoyl)-glycerol(in) = 1,2,3-tri-(9Z-octadecenoyl)-glycerol(out). It carries out the reaction cholesteryl (9Z,12Z)-octadecadienoate(in) = cholesteryl (9Z,12Z)-octadecadienoate(out). Its function is as follows. Involved in the transfer of neutral lipids, including cholesteryl ester and triglyceride, among lipoprotein particles. Allows the net movement of cholesteryl ester from high density lipoproteins/HDL to triglyceride-rich very low density lipoproteins/VLDL, and the equimolar transport of triglyceride from VLDL to HDL. Regulates the reverse cholesterol transport, by which excess cholesterol is removed from peripheral tissues and returned to the liver for elimination. The polypeptide is Cholesteryl ester transfer protein (Cricetulus griseus (Chinese hamster)).